A 141-amino-acid polypeptide reads, in one-letter code: Hemoglobin subunit alpha-D (141 aa).

The 141-residue stretch at M1–R141 folds into the Globin domain. Heme b contacts are provided by H58 and H87.

The protein belongs to the globin family. As to quaternary structure, heterotetramer of two alpha-D chains and two beta chains. As to expression, red blood cells.

Its function is as follows. Involved in oxygen transport from the lung to the various peripheral tissues. This is Hemoglobin subunit alpha-D (HBAD) from Chelonoidis niger (Galapagos giant tortoise).